The primary structure comprises 387 residues: Phosphoglycerate kinase (387 aa).

Substrate-binding positions include 21-23, Arg-36, 59-62, Arg-113, and Arg-146; these read DLN and HLGR. Residues Lys-197, Glu-314, and 340–343 each bind ATP; that span reads GGDT.

The protein belongs to the phosphoglycerate kinase family. As to quaternary structure, monomer.

The protein resides in the cytoplasm. It carries out the reaction (2R)-3-phosphoglycerate + ATP = (2R)-3-phospho-glyceroyl phosphate + ADP. It participates in carbohydrate degradation; glycolysis; pyruvate from D-glyceraldehyde 3-phosphate: step 2/5. The protein is Phosphoglycerate kinase of Pseudomonas aeruginosa (strain ATCC 15692 / DSM 22644 / CIP 104116 / JCM 14847 / LMG 12228 / 1C / PRS 101 / PAO1).